Reading from the N-terminus, the 120-residue chain is Anti-adapter protein IraM (120 aa).

It belongs to the IraM/RssC family.

Its subcellular location is the cytoplasm. Functionally, involved in the stabilization of the sigma stress factor RpoS. This chain is Anti-adapter protein IraM, found in Salmonella choleraesuis (strain SC-B67).